Consider the following 341-residue polypeptide: Methionine import ATP-binding protein MetN (341 aa).

One can recognise an ABC transporter domain in the interval 2–241; that stretch reads IELNQIVKRY…PQHDVTKRFV (240 aa). Position 38–45 (38–45) interacts with ATP; sequence GFSGAGKS.

It belongs to the ABC transporter superfamily. Methionine importer (TC 3.A.1.24) family. As to quaternary structure, the complex is composed of two ATP-binding proteins (MetN), two transmembrane proteins (MetI) and a solute-binding protein (MetQ).

The protein resides in the cell membrane. The catalysed reaction is L-methionine(out) + ATP + H2O = L-methionine(in) + ADP + phosphate + H(+). It carries out the reaction D-methionine(out) + ATP + H2O = D-methionine(in) + ADP + phosphate + H(+). In terms of biological role, part of the ABC transporter complex MetNIQ involved in methionine import. Responsible for energy coupling to the transport system. In Staphylococcus saprophyticus subsp. saprophyticus (strain ATCC 15305 / DSM 20229 / NCIMB 8711 / NCTC 7292 / S-41), this protein is Methionine import ATP-binding protein MetN.